Consider the following 86-residue polypeptide: Small ribosomal subunit protein uS17 (86 aa).

This sequence belongs to the universal ribosomal protein uS17 family. In terms of assembly, part of the 30S ribosomal subunit.

Its function is as follows. One of the primary rRNA binding proteins, it binds specifically to the 5'-end of 16S ribosomal RNA. This chain is Small ribosomal subunit protein uS17, found in Exiguobacterium sp. (strain ATCC BAA-1283 / AT1b).